The following is a 747-amino-acid chain: Superkiller protein 7 (747 aa).

The interval 14-51 (KSKGLLSADQSHSTSKSASLLERLHKNRETKDNNAETK) is disordered. Positions 21 to 31 (ADQSHSTSKSA) are enriched in polar residues. The span at 35–51 (ERLHKNRETKDNNAETK) shows a compositional bias: basic and acidic residues. Phosphoserine occurs at positions 88 and 90. The segment at 89 to 117 (NSDLEKQGKSVTLDSKENELPTKRKSPDD) is disordered. In terms of domain architecture, tr-type G spans 265–503 (PLNLTCLFLG…YVPEWYEGPT (239 aa)). A G1 region spans residues 274-281 (GDTNAGKS). Residue 274–281 (GDTNAGKS) participates in GTP binding. Residues 331 to 335 (GFSMF) form a G2 region. The tract at residues 356–359 (DTPG) is G3. GTP-binding positions include 356–360 (DTPGS) and 427–430 (NKAD). Residues 427–430 (NKAD) form a G4 region. The segment at 467 to 469 (SGL) is G5.

This sequence belongs to the TRAFAC class translation factor GTPase superfamily. Classic translation factor GTPase family. In terms of assembly, interacts with the exosome and with the SKI complex composed of at least SKI2, SKI3 and SKI8. Interacts directly with SKI3 and SKI8.

It localises to the cytoplasm. Functionally, represses the expression of non-poly(A) mRNAs like L-A or M viruses and is therefore involved in antiviral system. Mediates interactions via its N-terminus between the exosome and the SKI complex which operate in the 3'-to-5' mRNA-decay pathway. By interacting with NAM7, is also required for nonsense-mediated 3'-to-5' mRNA-decay (NMD). May recognize a stalled 80S ribosome at the 3'-end of a nonstop mRNA which leads to the recruitment of the exosome and SKI complexes to the mRNAs to be degraded. The sequence is that of Superkiller protein 7 (SKI7) from Saccharomyces cerevisiae (strain ATCC 204508 / S288c) (Baker's yeast).